A 26-amino-acid chain; its full sequence is Ribulose bisphosphate carboxylase large chain (26 aa).

The propeptide occupies 1-2 (MS). Proline 3 carries the N-acetylproline modification.

It belongs to the RuBisCO large chain family. Type I subfamily. In terms of assembly, heterohexadecamer of 8 large chains and 8 small chains.

The protein resides in the plastid. It localises to the chloroplast. It catalyses the reaction 2 (2R)-3-phosphoglycerate + 2 H(+) = D-ribulose 1,5-bisphosphate + CO2 + H2O. The enzyme catalyses D-ribulose 1,5-bisphosphate + O2 = 2-phosphoglycolate + (2R)-3-phosphoglycerate + 2 H(+). RuBisCO catalyzes two reactions: the carboxylation of D-ribulose 1,5-bisphosphate, the primary event in carbon dioxide fixation, as well as the oxidative fragmentation of the pentose substrate in the photorespiration process. Both reactions occur simultaneously and in competition at the same active site. The sequence is that of Ribulose bisphosphate carboxylase large chain (rbcL) from Vicia faba (Broad bean).